The primary structure comprises 386 residues: MSELIQNVKASFEQVLGYAPSHIIQAPGRVNLIGEHTDYNDGFVLPCAINYQTVVAAAKREDNIVRVVSVDYGNAVDEFDITQAITFQQDKMWANYIRGVVKCLLARGYQFTGADISVSGNVPQGAGLSSSAALEVVIGQTFKVLFNLEISQAEIALNGQQAENEFVGCNCGIMDQMISAEGRENHAMLLDCRSLETEAVSMPEDMAVVIINSNKKRGLVDSEYNTRRQQCEEAARIFGVKALRDVTIEQFNEKVAELDEMVAKRARHVITENDRTVEAAQALRAHDMKRMGELMAESHASMRDDFEITVKEIDTLVEIVKEVIGDQGGVRMTGGGFGGCIVALVPPALVDDVKAEVEAKYQAATGLKESIYVCQAQNGAGLVEVL.

Residue 35-38 (EHTD) coordinates substrate. Residues Ser69 and 125-131 (GAGLSSS) contribute to the ATP site. Mg(2+)-binding residues include Ser131 and Glu163. Asp175 acts as the Proton acceptor in catalysis. Position 224 (Tyr224) interacts with substrate.

Belongs to the GHMP kinase family. GalK subfamily.

It localises to the cytoplasm. The catalysed reaction is alpha-D-galactose + ATP = alpha-D-galactose 1-phosphate + ADP + H(+). It participates in carbohydrate metabolism; galactose metabolism. Catalyzes the transfer of the gamma-phosphate of ATP to D-galactose to form alpha-D-galactose-1-phosphate (Gal-1-P). This is Galactokinase from Vibrio parahaemolyticus serotype O3:K6 (strain RIMD 2210633).